Consider the following 757-residue polypeptide: Relaxin receptor 1 (757 aa).

Topologically, residues 1 to 408 (MTSGSVFFYI…LENLLASIIQ (408 aa)) are extracellular. An LDL-receptor class A domain is found at 26 to 63 (KCSLGYFPCGNITKCLPQLLHCNGVDDCGNQADEDNCG). Intrachain disulfides connect Cys27–Cys40, Cys34–Cys53, and Cys47–Cys62. A glycan (N-linked (GlcNAc...) asparagine) is linked at Asn36. Ca(2+) is bound by residues Leu45, Asn48, Val50, Asp52, Asp58, and Glu59. The LRRNT domain occupies 91-127 (ETPECLVGSVPVQCLCRGLELDCDETNLRAVPSVSSN). A glycan (N-linked (GlcNAc...) asparagine) is linked at Asn127. LRR repeat units lie at residues 151 to 172 (DLQK…AFRG), 175 to 196 (SLTK…VFED), 199 to 220 (RLEW…TFYG), 223 to 244 (SLIL…PLCQ), 248 to 269 (RLHW…TLIS), 272 to 293 (NLTV…TFAP), 296 to 317 (KLDE…IFKD), 320 to 341 (ELSQ…QFDY), and 344 to 365 (KLKS…MFRP). Residues Asn264 and Asn272 are each glycosylated (N-linked (GlcNAc...) asparagine). Asn325 carries an N-linked (GlcNAc...) asparagine glycan. N-linked (GlcNAc...) asparagine glycosylation is present at Asn368. The chain crosses the membrane as a helical span at residues 409–429 (RVFVWVVSAVTCFGNVFVICM). Topologically, residues 430–443 (RPYIRSENKLYAMS) are cytoplasmic. The chain crosses the membrane as a helical span at residues 444-464 (IISLCCADCLMGIYLFVIGGF). The Extracellular segment spans residues 465–486 (DLKFRGEYNKHAQLWMESTHCQ). Residues Cys485 and Cys563 are joined by a disulfide bond. The chain crosses the membrane as a helical span at residues 487–507 (LVGSLAILSTEVSVLLLTFLT). The Cytoplasmic portion of the chain corresponds to 508–527 (LEKYICIVYPFRCVRPGKCR). The chain crosses the membrane as a helical span at residues 528–548 (TITVLILIWITGFIVAFIPLS). Over 549-577 (NKEFFKNYYGTNGVCFPLHSEDTESIGAQ) the chain is Extracellular. The chain crosses the membrane as a helical span at residues 578-598 (VYSVAIFLGINLAAFIIIVFS). The Cytoplasmic portion of the chain corresponds to 599-629 (YGSMFYSVHQSAITATEIRNQVKKEMILAKR). A helical transmembrane segment spans residues 630–650 (FFFIVFTDALCWIPIFVVKFL). Residues 651–660 (SLLQVEIPGT) are Extracellular-facing. A helical transmembrane segment spans residues 661 to 681 (ITSWVVIFILPINSALNPILY). Topologically, residues 682–757 (TLTTRPFKEM…SQSTRLNSYS (76 aa)) are cytoplasmic.

The protein belongs to the G-protein coupled receptor 1 family. Interacts with C1QTNF8.

The protein resides in the cell membrane. In terms of biological role, receptor for relaxins. The activity of this receptor is mediated by G proteins leading to stimulation of adenylate cyclase and an increase of cAMP. Binding of the ligand may also activate a tyrosine kinase pathway that inhibits the activity of a phosphodiesterase that degrades cAMP. This chain is Relaxin receptor 1 (RXFP1), found in Pongo abelii (Sumatran orangutan).